A 277-amino-acid chain; its full sequence is Large ribosomal subunit protein uL2 (277 aa).

Positions 223-277 (VAMNPVDHPHGGGEGRTSTGRHPVTPWGKRTLGKKTRKRKASDKYIIRSRRARKR) are disordered. Basic residues predominate over residues 253–277 (TLGKKTRKRKASDKYIIRSRRARKR).

This sequence belongs to the universal ribosomal protein uL2 family. Part of the 50S ribosomal subunit. Forms a bridge to the 30S subunit in the 70S ribosome.

Its function is as follows. One of the primary rRNA binding proteins. Required for association of the 30S and 50S subunits to form the 70S ribosome, for tRNA binding and peptide bond formation. It has been suggested to have peptidyltransferase activity; this is somewhat controversial. Makes several contacts with the 16S rRNA in the 70S ribosome. This Halothermothrix orenii (strain H 168 / OCM 544 / DSM 9562) protein is Large ribosomal subunit protein uL2.